Here is a 125-residue protein sequence, read N- to C-terminus: uncharacterized protein (125 aa).

The 63-residue stretch at 1 to 63 (MSQSIEDYLE…YEPYIGITLT (63 aa)) folds into the HTH dtxR-type domain.

The protein belongs to the DtxR/MntR family.

This is an uncharacterized protein from Methanocaldococcus jannaschii (strain ATCC 43067 / DSM 2661 / JAL-1 / JCM 10045 / NBRC 100440) (Methanococcus jannaschii).